The primary structure comprises 125 residues: Protein ApaG (125 aa).

Residues 1–125 (MINAPRVCVQ…FRLAIPSLIH (125 aa)) form the ApaG domain.

The polypeptide is Protein ApaG (Pectobacterium atrosepticum (strain SCRI 1043 / ATCC BAA-672) (Erwinia carotovora subsp. atroseptica)).